Consider the following 124-residue polypeptide: Small ribosomal subunit protein uS13 (124 aa).

The disordered stretch occupies residues 94–124 (KGLPVRGQRTKTNARTRKGPKRTVAGKKKAR).

It belongs to the universal ribosomal protein uS13 family. As to quaternary structure, part of the 30S ribosomal subunit. Forms a loose heterodimer with protein S19. Forms two bridges to the 50S subunit in the 70S ribosome.

Located at the top of the head of the 30S subunit, it contacts several helices of the 16S rRNA. In the 70S ribosome it contacts the 23S rRNA (bridge B1a) and protein L5 of the 50S subunit (bridge B1b), connecting the 2 subunits; these bridges are implicated in subunit movement. Contacts the tRNAs in the A and P-sites. This Pseudarthrobacter chlorophenolicus (strain ATCC 700700 / DSM 12829 / CIP 107037 / JCM 12360 / KCTC 9906 / NCIMB 13794 / A6) (Arthrobacter chlorophenolicus) protein is Small ribosomal subunit protein uS13.